The primary structure comprises 181 residues: Large ribosomal subunit protein uL5 (181 aa).

It belongs to the universal ribosomal protein uL5 family. In terms of assembly, part of the 50S ribosomal subunit; part of the 5S rRNA/L5/L18/L25 subcomplex. Contacts the 5S rRNA and the P site tRNA. Forms a bridge to the 30S subunit in the 70S ribosome.

Its function is as follows. This is one of the proteins that bind and probably mediate the attachment of the 5S RNA into the large ribosomal subunit, where it forms part of the central protuberance. In the 70S ribosome it contacts protein S13 of the 30S subunit (bridge B1b), connecting the 2 subunits; this bridge is implicated in subunit movement. Contacts the P site tRNA; the 5S rRNA and some of its associated proteins might help stabilize positioning of ribosome-bound tRNAs. In Helicobacter pylori (strain G27), this protein is Large ribosomal subunit protein uL5.